We begin with the raw amino-acid sequence, 2203 residues long: Voltage-dependent L-type calcium channel subunit alpha-1D (2203 aa).

Disordered regions lie at residues 1–51 (MMMM…QTVL) and 64–100 (KAAQTMSTSAPPPVGSLSQRKRQQYAKSKKQGNSSNS). Over 1 to 126 (MMMMMMMKKM…RACISIVDWK (126 aa)) the chain is Cytoplasmic. Polar residues predominate over residues 38–51 (GPTSQPNSSKQTVL). Residues 82 to 93 (QRKRQQYAKSKK) are compositionally biased toward basic residues. An I repeat occupies 112-408 (NNPIRRACIS…NLVLGVLSGE (297 aa)). A helical membrane pass occupies residues 127 to 145 (PFDIFILLAIFANCVALAI). Topologically, residues 146 to 163 (YIPFPEDDSNSTNHNLEK) are extracellular. Asn-155 carries N-linked (GlcNAc...) asparagine glycosylation. A helical membrane pass occupies residues 164-183 (VEYAFLIIFTVETFLKIIAS). The Cytoplasmic segment spans residues 184–195 (GLLLHPNASVRN). The helical transmembrane segment at 196 to 214 (GWNLLDFVIVIVGLFSVIL) threads the bilayer. Over 215–235 (EQLTKETEGGNHSSGKSGGFD) the chain is Extracellular. A glycan (N-linked (GlcNAc...) asparagine) is linked at Asn-225. The helical transmembrane segment at 236–254 (VKALRAFRVLRPLRLVSGV) threads the bilayer. The Cytoplasmic portion of the chain corresponds to 255–273 (PSLQVVLNSIIKAMVPLLH). Residues 274–293 (IALLVLFVIIIYAIIGLELF) traverse the membrane as a helical segment. The Extracellular portion of the chain corresponds to 294 to 381 (IGKMHKTCFF…WVNDAIGWEW (88 aa)). A glycan (N-linked (GlcNAc...) asparagine) is linked at Asn-329. Glu-364 is a binding site for Ca(2+). A helical membrane pass occupies residues 382-406 (PWVYFVSLIILGSFFVLNLVLGVLS). Topologically, residues 407 to 582 (GEFSKEREKA…RRCRAAVKSV (176 aa)) are cytoplasmic. The segment at 429-446 (QQLEEDLKGYLDWITQAE) is binding to the beta subunit. The segment at 449 to 480 (DPENEEEGGEEGKRNTSMPTSETESVNTENVS) is disordered. Positions 463–479 (NTSMPTSETESVNTENV) are enriched in polar residues. Residues 528 to 774 (EALCVCRCSL…DWNAVMYDGI (247 aa)) form an II repeat. A helical transmembrane segment spans residues 583-602 (TFYWLVIVLVFLNTLTISSE). Over 603 to 617 (HYNQPDWLTQIQDIA) the chain is Extracellular. Residues 618-636 (NKVLLALFTCEMLVKMYSL) form a helical membrane-spanning segment. At 637-644 (GLQAYFVS) the chain is on the cytoplasmic side. The chain crosses the membrane as a helical span at residues 645–663 (LFNRFDCFVVCGGITETIL). Over 664-673 (VELELMSPLG) the chain is Extracellular. The helical transmembrane segment at 674-692 (VSVFRCVRLLRIFKVTRHW) threads the bilayer. Topologically, residues 693-711 (TSLSNLVASLLNSMKSIAS) are cytoplasmic. A helical membrane pass occupies residues 712 to 732 (LLLLLFLFIIIFSLLGMQLFG). The Extracellular segment spans residues 733–786 (GKFNFDETQTKRSTFDNFPQALLTVFQILTGEDWNAVMYDGIMAYGGPSSSGMI). Residue Glu-764 coordinates Ca(2+). The chain crosses the membrane as a helical span at residues 787 to 811 (VCIYFIILFICGNYILLKLFLAIAV). At 812–945 (DNLADAESLN…VGCHKLINHH (134 aa)) the chain is on the cytoplasmic side. Positions 822 to 909 (TAQKEEAEEK…AGPRPRRISE (88 aa)) are disordered. A compositionally biased stretch (basic and acidic residues) spans 824 to 849 (QKEEAEEKERKKIARKESLENKKNNK). Over residues 850–861 (PEVNQIANSDNK) the composition is skewed to polar residues. Positions 884 to 897 (VGEEEEEEEEDEPE) are enriched in acidic residues. An III repeat occupies 892–1174 (EEDEPEVPAG…LLYKAIDSNG (283 aa)). A helical transmembrane segment spans residues 946 to 964 (IFTNLILVFIMLSSAALAA). At 965–980 (EDPIRSHSFRNTILGY) the chain is on the extracellular side. The chain crosses the membrane as a helical span at residues 981-1000 (FDYAFTAIFTVEILLKMTTF). At 1001–1012 (GAFLHKGAFCRN) the chain is on the cytoplasmic side. A helical membrane pass occupies residues 1013-1031 (YFNLLDMLVVGVSLVSFGI). At 1032–1037 (QSSAIS) the chain is on the extracellular side. The chain crosses the membrane as a helical span at residues 1038–1057 (VVKILRVLRVLRPLRAINRA). Topologically, residues 1058-1076 (KGLKHVVQCVFVAIRTIGN) are cytoplasmic. The helical transmembrane segment at 1077 to 1096 (IMIVTTLLQFMFACIGVQLF) threads the bilayer. The Extracellular portion of the chain corresponds to 1097 to 1186 (KGKFYRCTDE…VGPVYNYRVE (90 aa)). Positions 1134–1224 (RIWQNSDFNF…QEQGEKEYKN (91 aa)) are dihydropyridine binding. Position 1160 (Glu-1160) interacts with Ca(2+). The helical transmembrane segment at 1187 to 1207 (ISIFFIIYIIIVAFFMMNIFV) threads the bilayer. At 1208 to 1264 (GFVIVTFQEQGEKEYKNCELDKNQRQCVEYALKARPLRRYIPKNPYQYKFWYVVNSS) the chain is on the cytoplasmic side. One copy of the IV repeat lies at 1211–1486 (IVTFQEQGEK…YTCGSNFAIV (276 aa)). Residues 1265 to 1283 (PFEYMMFVLIMLNTLCLAM) traverse the membrane as a helical segment. Residues 1284 to 1298 (QHYEQSKMFNDAMDI) lie on the Extracellular side of the membrane. Residues 1299–1318 (LNMVFTGVFTVEMVLKVIAF) form a helical membrane-spanning segment. The Cytoplasmic segment spans residues 1319-1325 (KPKGYFS). A helical membrane pass occupies residues 1326 to 1347 (DAWNTFDSLIVIGSIIDVALSE). The Extracellular segment spans residues 1348–1357 (ADNSEESNRI). The helical transmembrane segment at 1358–1377 (SITFFRLFRVMRLVKLLSRG) threads the bilayer. The Cytoplasmic segment spans residues 1378–1396 (EGIRTLLWTFIKSFQALPY). A helical transmembrane segment spans residues 1397 to 1416 (VALLIAMLFFIYAVIGMQMF). Residues 1417–1483 (GKVAMRDNNQ…GEEYTCGSNF (67 aa)) are Extracellular-facing. Positions 1464–1530 (LCDPDSDYNP…LGPHHLDEFK (67 aa)) are dihydropyridine binding. The phenylalkylamine binding stretch occupies residues 1476-1519 (EYTCGSNFAIVYFISFYMLCAFLIINLFVAVIMDNFDYLTRDWS). A helical membrane pass occupies residues 1484–1508 (AIVYFISFYMLCAFLIINLFVAVIM). The Cytoplasmic portion of the chain corresponds to 1509-2203 (DNFDYLTRDW…ADEMICITTL (695 aa)). Disordered stretches follow at residues 1734–1766 (NHVNSDRRESLQQTNTTHRPLHVQRPSIPPASD), 1795–1816 (TSTNANLNNANMSKAAHGKRPS), 1920–1963 (FERP…HRRS), and 2176–2195 (GPGYSDEEPDPGREEEDLAD). Positions 1795-1806 (TSTNANLNNANM) are enriched in polar residues. Acidic residues predominate over residues 2180 to 2195 (SDEEPDPGREEEDLAD).

Belongs to the calcium channel alpha-1 subunit (TC 1.A.1.11) family. CACNA1D subfamily. In terms of assembly, voltage-dependent calcium channels are multisubunit complexes, consisting of alpha-1, alpha-2, beta and delta subunits in a 1:1:1:1 ratio. The channel activity is directed by the pore-forming and voltage-sensitive alpha-1 subunit. In many cases, this subunit is sufficient to generate voltage-sensitive calcium channel activity. The auxiliary subunits beta and alpha-2/delta linked by a disulfide bridge regulate the channel activity. Interacts with CABP1 and CABP4, resulting in a near elimination of calcium-dependent inactivation of the channel. Interacts with RIMBP2. As to expression, expressed in brain, pancreatic islets and B-lymphocytes.

The protein resides in the membrane. It catalyses the reaction Ca(2+)(in) = Ca(2+)(out). In terms of biological role, voltage-sensitive calcium channels (VSCC) mediate the entry of calcium ions into excitable cells and are also involved in a variety of calcium-dependent processes, including muscle contraction, hormone or neurotransmitter release, gene expression, cell motility, cell division and cell death. The isoform alpha-1D gives rise to L-type calcium currents. Long-lasting (L-type) calcium channels belong to the 'high-voltage activated' (HVA) group. They are blocked by dihydropyridines (DHP), phenylalkylamines, and by benzothiazepines. Voltage-sensitive calcium channels (VSCC) mediate the entry of calcium ions into excitable cells and are also involved in a variety of calcium-dependent processes, including muscle contraction, hormone or neurotransmitter release, gene expression, cell motility, cell division and cell death. The isoform alpha-1D gives rise to L-type calcium currents. In Rattus norvegicus (Rat), this protein is Voltage-dependent L-type calcium channel subunit alpha-1D (Cacna1d).